Here is a 159-residue protein sequence, read N- to C-terminus: SsrA-binding protein (159 aa).

It belongs to the SmpB family.

It is found in the cytoplasm. Its function is as follows. Required for rescue of stalled ribosomes mediated by trans-translation. Binds to transfer-messenger RNA (tmRNA), required for stable association of tmRNA with ribosomes. tmRNA and SmpB together mimic tRNA shape, replacing the anticodon stem-loop with SmpB. tmRNA is encoded by the ssrA gene; the 2 termini fold to resemble tRNA(Ala) and it encodes a 'tag peptide', a short internal open reading frame. During trans-translation Ala-aminoacylated tmRNA acts like a tRNA, entering the A-site of stalled ribosomes, displacing the stalled mRNA. The ribosome then switches to translate the ORF on the tmRNA; the nascent peptide is terminated with the 'tag peptide' encoded by the tmRNA and targeted for degradation. The ribosome is freed to recommence translation, which seems to be the essential function of trans-translation. This Frankia casuarinae (strain DSM 45818 / CECT 9043 / HFP020203 / CcI3) protein is SsrA-binding protein.